A 493-amino-acid chain; its full sequence is Glutamyl-tRNA(Gln) amidotransferase subunit A (493 aa).

Active-site charge relay system residues include lysine 78 and serine 158. The active-site Acyl-ester intermediate is serine 182.

Belongs to the amidase family. GatA subfamily. Heterotrimer of A, B and C subunits.

It carries out the reaction L-glutamyl-tRNA(Gln) + L-glutamine + ATP + H2O = L-glutaminyl-tRNA(Gln) + L-glutamate + ADP + phosphate + H(+). Functionally, allows the formation of correctly charged Gln-tRNA(Gln) through the transamidation of misacylated Glu-tRNA(Gln) in organisms which lack glutaminyl-tRNA synthetase. The reaction takes place in the presence of glutamine and ATP through an activated gamma-phospho-Glu-tRNA(Gln). The sequence is that of Glutamyl-tRNA(Gln) amidotransferase subunit A from Methylorubrum extorquens (strain PA1) (Methylobacterium extorquens).